Consider the following 88-residue polypeptide: Acylphosphatase (88 aa).

Positions 3-88 (AARFIFTGVV…IPTTEAFVTG (86 aa)) constitute an Acylphosphatase-like domain. Residues R18 and N36 contribute to the active site.

Belongs to the acylphosphatase family.

It catalyses the reaction an acyl phosphate + H2O = a carboxylate + phosphate + H(+). This chain is Acylphosphatase (acyP), found in Xanthomonas campestris pv. campestris (strain 8004).